The primary structure comprises 372 residues: Lysophosphatidic acid receptor 5 (372 aa).

Residues 1–26 lie on the Extracellular side of the membrane; sequence MLANSSSTNSSVLPCPDYRPTHRLHL. Asparagine 4 and asparagine 9 each carry an N-linked (GlcNAc...) asparagine glycan. The helical transmembrane segment at 27–47 threads the bilayer; sequence VVYSLVLAAGLPLNALALWVF. Residues 48-55 lie on the Cytoplasmic side of the membrane; it reads LRALRVHS. The helical transmembrane segment at 56–76 threads the bilayer; sequence VVSVYMCNLAASDLLFTLSLP. At 77-96 the chain is on the extracellular side; that stretch reads VRLSYYALHHWPFPDLLCQT. Cysteine 94 and cysteine 175 are joined by a disulfide. The helical transmembrane segment at 97–117 threads the bilayer; the sequence is TGAIFQMNMYGSCIFLMLINV. Residues 118–136 lie on the Cytoplasmic side of the membrane; the sequence is DRYAAIVHPLRLRHLRRPR. A helical transmembrane segment spans residues 137 to 157; sequence VARLLCLGVWALILVFAVPAA. Residues 158–187 are Extracellular-facing; sequence RVHRPSRCRYRDLEVRLCFESFSDELWKGR. A helical transmembrane segment spans residues 188–208; sequence LLPLVLLAEALGFLLPLAAVV. The Cytoplasmic segment spans residues 209 to 239; that stretch reads YSSGRVFWTLARPDATQSQRRRKTVRLLLAN. Residues 240–260 form a helical membrane-spanning segment; it reads LVIFLLCFVPYNSTLAVYGLL. Over 261–276 the chain is Extracellular; the sequence is RSKLVAASVPARDRVR. Residues 277–297 traverse the membrane as a helical segment; it reads GVLMVMVLLAGANCVLDPLVY. Topologically, residues 298-372 are cytoplasmic; that stretch reads YFSAEGFRNT…FTQCPQDSAL (75 aa). The tract at residues 312–372 is disordered; sequence GTPHRARTSA…FTQCPQDSAL (61 aa). 2 stretches are compositionally biased toward polar residues: residues 332 to 341 and 357 to 372; these read SERSAVTTDA and SHSLSSFTQCPQDSAL.

It belongs to the G-protein coupled receptor 1 family. Not expressed in frontal cortex, basal forebrain, caudate putamen, thalamus, or hippocampus.

Its subcellular location is the cell membrane. Its function is as follows. Receptor for lysophosphatidic acid (LPA), a mediator of diverse cellular activities. The sequence is that of Lysophosphatidic acid receptor 5 (LPAR5) from Homo sapiens (Human).